Reading from the N-terminus, the 916-residue chain is Beta-scruin (916 aa).

Kelch repeat units lie at residues 82–133 (AVLI…YFHG), 134–187 (KVYL…IMDE), 188–235 (RIFV…NNEG), 237–289 (IYVV…TQNK), 291–341 (IWIW…KAGT), and 342–390 (QVFI…GIPV). A disordered region spans residues 393-426 (SPASDITTSKTTRSGSRKTQKTLKDKQQSDIHAR). Residues 414–425 (TLKDKQQSDIHA) show a composition bias toward basic and acidic residues. Kelch repeat units lie at residues 586–637 (VIIA…YYRG), 638–691 (AIYV…VFND), 692–739 (SIYV…SHGG), 741–793 (LWVM…VCDD), 795–847 (IWLC…ALES), and 849–896 (LYLI…TIPP).

In terms of tissue distribution, sperm.

In terms of biological role, may have an enzymatic role. Found the acrosomal vesicle at the anterior of sperm but not in the acrosomal process. In Limulus polyphemus (Atlantic horseshoe crab), this protein is Beta-scruin.